The sequence spans 454 residues: MLELLTEKFSHALEKLTNARKITEKNINQTLREIRLALLEADVDYQVAKDFIKRIREKVVGKEVPKNLSPAEFVIKTVYEELVDILGGEKADLKKGTVLFVGLQGTGKTTTIGKIANLLKKGGHKVAVSSTDLRRPAAMLQLQRLAERVGVPYYEFEEGLGAVEIARRAVKRAKEESVDYLLLDTAGRLHVDEELMKELQEIKEVTNPSEILYVADAMQGQTALETAKTFHERLGLTGVVITKMDGDARGGLALSVKEVLGVPIKFIGVGEKIEDIEPFYPDRIAQRILGLGDIQSLVEKAQEVITEDKAQVMATKVMTGEFDLEDLREMLRMIQQMGPLDKLLSMIPGVAPQLKHLKVDEKQFKKIEAIINSMTPEERRNPKIINMSRKKRIARGSGTTVSDVNKLLKRYEEMKKMMRKLQKAGGMPAIPKMPKMPRFPSEASSFNLFLFLST.

GTP contacts are provided by residues 102–109, 184–188, and 242–245; these read GLQGTGKT, DTAGR, and TKMD.

This sequence belongs to the GTP-binding SRP family. SRP54 subfamily. In terms of assembly, part of the signal recognition particle protein translocation system, which is composed of SRP and FtsY.

It localises to the cytoplasm. It catalyses the reaction GTP + H2O = GDP + phosphate + H(+). Functionally, involved in targeting and insertion of nascent membrane proteins into the cytoplasmic membrane. Binds to the hydrophobic signal sequence of the ribosome-nascent chain (RNC) as it emerges from the ribosomes. The SRP-RNC complex is then targeted to the cytoplasmic membrane where it interacts with the SRP receptor FtsY. The chain is Signal recognition particle protein from Aquifex aeolicus (strain VF5).